We begin with the raw amino-acid sequence, 197 residues long: Phospholipid hydroperoxide glutathione peroxidase (197 aa).

Phosphoserine is present on serine 40. Residue selenocysteine 73 is part of the active site. Selenocysteine 73 is a non-standard amino acid (selenocysteine).

It belongs to the glutathione peroxidase family. In terms of assembly, monomer. Has a tendency to form higher mass oligomers. Interacts with FUNDC1; this interaction promotes GPX4 recruitment into mitochondria through TOM/TIM complex where it is degraded by mitophagy. Expressed in testis. Also expressed in liver, lung, kidney and spinal cord.

The protein localises to the mitochondrion. The protein resides in the cytoplasm. It catalyses the reaction a hydroperoxy polyunsaturated fatty acid + 2 glutathione = a hydroxy polyunsaturated fatty acid + glutathione disulfide + H2O. It carries out the reaction 2 glutathione + H2O2 = glutathione disulfide + 2 H2O. The enzyme catalyses tert-butyl hydroperoxide + 2 glutathione = tert-butanol + glutathione disulfide + H2O. The catalysed reaction is cumene hydroperoxide + 2 glutathione = 2-phenylpropan-2-ol + glutathione disulfide + H2O. It catalyses the reaction (9S)-hydroperoxy-(10E,12Z)-octadecadienoate + 2 glutathione = (9S)-hydroxy-(10E,12Z)-octadecadienoate + glutathione disulfide + H2O. It carries out the reaction (13S)-hydroperoxy-(9Z,11E)-octadecadienoate + 2 glutathione = (13S)-hydroxy-(9Z,11E)-octadecadienoate + glutathione disulfide + H2O. The enzyme catalyses (5S)-hydroperoxy-(6E,8Z,11Z,14Z)-eicosatetraenoate + 2 glutathione = (5S)-hydroxy-(6E,8Z,11Z,14Z)-eicosatetraenoate + glutathione disulfide + H2O. The catalysed reaction is (12R)-hydroperoxy-(5Z,8Z,10E,14Z)-eicosatetraenoate + 2 glutathione = (12R)-hydroxy-(5Z,8Z,10E,14Z)-eicosatetraenoate + glutathione disulfide + H2O. It catalyses the reaction (12S)-hydroperoxy-(5Z,8Z,10E,14Z)-eicosatetraenoate + 2 glutathione = (12S)-hydroxy-(5Z,8Z,10E,14Z)-eicosatetraenoate + glutathione disulfide + H2O. It carries out the reaction (15S)-hydroperoxy-(5Z,8Z,11Z,13E)-eicosatetraenoate + 2 glutathione = (15S)-hydroxy-(5Z,8Z,11Z,13E)-eicosatetraenoate + glutathione disulfide + H2O. The enzyme catalyses (5S)-hydroperoxy-(6E,8Z,11Z,14Z,17Z)-eicosapentaenoate + 2 glutathione = (5S)-hydroxy-(6E,8Z,11Z,14Z,17Z)-eicosapentaenoate + glutathione disulfide + H2O. The catalysed reaction is (12S)-hydroperoxy-(5Z,8Z,10E,14Z,17Z)-eicosapentaenoate + 2 glutathione = (12S)-hydroxy-(5Z,8Z,10E,14Z,17Z)-eicosapentaenoate + glutathione disulfide + H2O. It catalyses the reaction (15S)-hydroperoxy-(5Z,8Z,11Z,13E,17Z)-eicosapentaenoate + 2 glutathione = (15S)-hydroxy-(5Z,8Z,11Z,13E,17Z)-eicosapentaenoate + glutathione disulfide + H2O. It carries out the reaction (15S)-hydroperoxy-(11Z,13E)-eicosadienoate + 2 glutathione = (15S)-hydroxy-(11Z,13E)-eicosadienoate + glutathione disulfide + H2O. The enzyme catalyses (17S)-hydroperoxy-(4Z,7Z,10Z,13Z,15E,19Z)-docosahexaenoate + 2 glutathione = (17S)-hydroxy-(4Z,7Z,10Z,13Z,15E,19Z)-docosahexaenoate + glutathione disulfide + H2O. The catalysed reaction is a hydroperoxy-1,2-diacyl-glycero-3-phosphocholine + 2 glutathione = a hydroxy-1,2-diacyl-glycero-3-phosphocholine + glutathione disulfide + H2O. Its function is as follows. Essential antioxidant peroxidase that directly reduces phospholipid hydroperoxide even if they are incorporated in membranes and lipoproteins. Can also reduce fatty acid hydroperoxide, cholesterol hydroperoxide and thymine hydroperoxide. Plays a key role in protecting cells from oxidative damage by preventing membrane lipid peroxidation. Required to prevent cells from ferroptosis, a non-apoptotic cell death resulting from an iron-dependent accumulation of lipid reactive oxygen species. The presence of selenocysteine (Sec) versus Cys at the active site is essential for life: it provides resistance to overoxidation and prevents cells against ferroptosis. The presence of Sec at the active site is also essential for the survival of a specific type of parvalbumin-positive interneurons, thereby preventing against fatal epileptic seizures. May be required to protect cells from the toxicity of ingested lipid hydroperoxides. Required for normal sperm development and male fertility. Essential for maturation and survival of photoreceptor cells. Plays a role in a primary T-cell response to viral and parasitic infection by protecting T-cells from ferroptosis and by supporting T-cell expansion. Plays a role of glutathione peroxidase in platelets in the arachidonic acid metabolism. Reduces hydroperoxy ester lipids formed by a 15-lipoxygenase that may play a role as down-regulator of the cellular 15-lipoxygenase pathway. Can also reduce small soluble hydroperoxides such as H2O2, cumene hydroperoxide and tert-butyl hydroperoxide. In Callithrix jacchus (White-tufted-ear marmoset), this protein is Phospholipid hydroperoxide glutathione peroxidase.